The primary structure comprises 480 residues: LETM1 domain-containing protein LETM2, mitochondrial (480 aa).

The transit peptide at 1-25 (MAFYSYNSFLAIFWTRLPGHSVYPS) directs the protein to the mitochondrion. At 26-175 (CSHFPSLAFL…LLRTCADVFR (150 aa)) the chain is on the mitochondrial intermembrane side. Positions 88-118 (GKPQLEQTGKPKAASPQPTKEAKTETTEEKR) are disordered. The segment covering 107–118 (KEAKTETTEEKR) has biased composition (basic and acidic residues). Residues 176-196 (LVPFMVFIIVPFMEFLIPVFL) traverse the membrane as a helical segment. The Mitochondrial matrix portion of the chain corresponds to 197 to 480 (KLFPDMLPST…QNSKADSKGA (284 aa)). A Letm1 RBD domain is found at 219 to 436 (KTMAAKLEIA…SAPQLKGTKD (218 aa)). A disordered region spans residues 398 to 444 (ELPPNIETPKPNLGIPTPPPPESKENLTDSAPQLKGTKDEEFIQLPP).

It localises to the mitochondrion inner membrane. The chain is LETM1 domain-containing protein LETM2, mitochondrial (Letm2) from Mus musculus (Mouse).